Reading from the N-terminus, the 36-residue chain is MCLSLGQRCGRHSNCCGYLCCFYDKCVVTAIGCGHY.

Disulfide bonds link C2-C16, C9-C21, C15-C26, and C20-C33.

Belongs to the conotoxin I1 superfamily. In terms of tissue distribution, expressed by the venom duct.

It is found in the secreted. The sequence is that of Conotoxin Bt11.4 from Conus betulinus (Beech cone).